A 447-amino-acid chain; its full sequence is N-succinylarginine dihydrolase (447 aa).

Residues 19-28, asparagine 110, and 137-138 contribute to the substrate site; these read AGLSFGNEAS and HR. Glutamate 174 is a catalytic residue. Arginine 212 contacts substrate. Residue histidine 248 is part of the active site. 2 residues coordinate substrate: aspartate 250 and asparagine 359. The Nucleophile role is filled by cysteine 365.

This sequence belongs to the succinylarginine dihydrolase family. Homodimer.

It catalyses the reaction N(2)-succinyl-L-arginine + 2 H2O + 2 H(+) = N(2)-succinyl-L-ornithine + 2 NH4(+) + CO2. It participates in amino-acid degradation; L-arginine degradation via AST pathway; L-glutamate and succinate from L-arginine: step 2/5. Catalyzes the hydrolysis of N(2)-succinylarginine into N(2)-succinylornithine, ammonia and CO(2). The chain is N-succinylarginine dihydrolase from Shigella boydii serotype 4 (strain Sb227).